Reading from the N-terminus, the 473-residue chain is Cysteine protease ATG4A (473 aa).

The tract at residues 1–33 is disordered; it reads MTSLPGRGVSPSSSDPLCEGNAAPSSSSSGQDL. Cys160 acts as the Nucleophile in catalysis. Active-site residues include Asp357 and His359.

This sequence belongs to the peptidase C54 family. As to quaternary structure, interacts with ATG8.

It is found in the cytoplasm. The enzyme catalyses [protein]-C-terminal L-amino acid-glycyl-phosphatidylethanolamide + H2O = [protein]-C-terminal L-amino acid-glycine + a 1,2-diacyl-sn-glycero-3-phosphoethanolamine. In terms of biological role, cysteine protease that plays a key role in autophagy by mediating both proteolytic activation and delipidation of ATG8 family proteins. The protease activity is required for proteolytic activation of ATG8 family proteins: cleaves the C-terminal amino acid of ATG8 proteins to reveal a C-terminal glycine. Exposure of the glycine at the C-terminus is essential for ATG8 proteins conjugation to phosphatidylethanolamine (PE) and insertion to membranes, which is necessary for autophagy. In addition to the protease activity, also mediates delipidation of PE-conjugated ATG8 proteins. The polypeptide is Cysteine protease ATG4A (ATG4A) (Oryza sativa subsp. indica (Rice)).